A 773-amino-acid polypeptide reads, in one-letter code: E3 ubiquitin-protein ligase RFWD3 (773 aa).

Disordered stretches follow at residues V18–G67, R92–S117, L139–V230, and G259–K279. S47 bears the Phosphoserine; by ATM and ATR mark. Residues A50–A59 are compositionally biased toward low complexity. Position 64 is a phosphoserine; by ATM and ATR (S64). Residues R151–R164 show a composition bias toward basic residues. A compositionally biased stretch (polar residues) spans V186–P205. The span at S207 to E221 shows a compositional bias: low complexity. Residues P263–L273 are compositionally biased toward polar residues. The RING-type; degenerate zinc finger occupies C287–N331. Positions S361 to L403 form a coiled coil. WD repeat units follow at residues M494–N536, G538–Q576, and K582–P627.

Interacts with MDM2 and p53/TP53. Binds to the RPA complex via direct interaction with RPA2. Interacts with RAD51. Post-translationally, phosphorylated at Ser-46 and Ser-63 upon DNA damage by ATM or ATR. ATM phosphorylation occurs at early times upon DNA damage, while ATR is the major kinase at later times. Phosphorylation by ATM and ATR is required to stabilize p53/TP53. Part of the phosphorylation depends upon RPA2 presence.

It localises to the nucleus. The protein resides in the PML body. Its subcellular location is the cytoplasm. The enzyme catalyses S-ubiquitinyl-[E2 ubiquitin-conjugating enzyme]-L-cysteine + [acceptor protein]-L-lysine = [E2 ubiquitin-conjugating enzyme]-L-cysteine + N(6)-ubiquitinyl-[acceptor protein]-L-lysine.. The protein operates within protein modification; protein ubiquitination. Functionally, E3 ubiquitin-protein ligase required for the repair of DNA interstrand cross-links (ICL) in response to DNA damage. Plays a key role in RPA-mediated DNA damage signaling and repair. Acts by mediating ubiquitination of the RPA complex (RPA1, RPA2 and RPA3 subunits) and RAD51 at stalled replication forks, leading to remove them from DNA damage sites and promote homologous recombination. Also mediates the ubiquitination of p53/TP53 in the late response to DNA damage, and acts as a positive regulator of p53/TP53 stability, thereby regulating the G1/S DNA damage checkpoint. May act by catalyzing the formation of short polyubiquitin chains on p53/TP53 that are not targeted to the proteasome. In response to ionizing radiation, interacts with MDM2 and enhances p53/TP53 ubiquitination, possibly by restricting MDM2 from extending polyubiquitin chains on ubiquitinated p53/TP53. Required to translesion DNA synthesis across DNA-protein cross-link adducts by catalyzing ubiquitination of proteins on single-stranded DNA (ssDNA). This chain is E3 ubiquitin-protein ligase RFWD3 (RFWD3), found in Ailuropoda melanoleuca (Giant panda).